A 95-amino-acid chain; its full sequence is Co-chaperonin GroES (95 aa).

It belongs to the GroES chaperonin family. Heptamer of 7 subunits arranged in a ring. Interacts with the chaperonin GroEL.

The protein resides in the cytoplasm. Its function is as follows. Together with the chaperonin GroEL, plays an essential role in assisting protein folding. The GroEL-GroES system forms a nano-cage that allows encapsulation of the non-native substrate proteins and provides a physical environment optimized to promote and accelerate protein folding. GroES binds to the apical surface of the GroEL ring, thereby capping the opening of the GroEL channel. This is Co-chaperonin GroES from Zymomonas mobilis subsp. mobilis (strain ATCC 31821 / ZM4 / CP4).